We begin with the raw amino-acid sequence, 367 residues long: tRNA N6-adenosine threonylcarbamoyltransferase (367 aa).

His-123 and His-127 together coordinate Fe cation. Substrate contacts are provided by residues 145 to 149 (LVSGG), Asp-178, Gly-191, and Asn-288. Asp-316 provides a ligand contact to Fe cation.

This sequence belongs to the KAE1 / TsaD family. Fe(2+) is required as a cofactor.

The protein resides in the cytoplasm. It catalyses the reaction L-threonylcarbamoyladenylate + adenosine(37) in tRNA = N(6)-L-threonylcarbamoyladenosine(37) in tRNA + AMP + H(+). Required for the formation of a threonylcarbamoyl group on adenosine at position 37 (t(6)A37) in tRNAs that read codons beginning with adenine. Is involved in the transfer of the threonylcarbamoyl moiety of threonylcarbamoyl-AMP (TC-AMP) to the N6 group of A37, together with TsaE and TsaB. TsaD likely plays a direct catalytic role in this reaction. This is tRNA N6-adenosine threonylcarbamoyltransferase from Caulobacter vibrioides (strain ATCC 19089 / CIP 103742 / CB 15) (Caulobacter crescentus).